Consider the following 27-residue polypeptide: Urumin (27 aa).

As to expression, expressed by the skin glands.

It localises to the secreted. In terms of biological role, amphibian peptide that shows viricidal activity against human H1N1 influenza A virus. It specifically targets the conserved stalk region of H1 hemagglutinin, and acts by actively destroying influenza virions. It shows a reduced activity on human H3N2 influenza A virus and no activity against other viruses (HIV, SIV, HSV-II, hepatitis C, Ebola, Zika, and Dengue viruses). In vivo, the peptide also protects mice infected with mouse-adapted influenza virus from lethal influenza infection. The peptide synthesized in D-amino acids is inactive. This is Urumin from Hydrophylax bahuvistara (Wide-spread fungoid frog).